A 37-amino-acid chain; its full sequence is U10-ctenitoxin-Co1a (37 aa).

4 disulfide bridges follow: C2/C17, C9/C22, C16/C33, and C24/C31.

In terms of tissue distribution, expressed by the venom gland.

It localises to the secreted. Antagonist of L-type calcium channels (Cav1/CACNA1). The polypeptide is U10-ctenitoxin-Co1a (Ctenus ornatus (Brazilian spider)).